We begin with the raw amino-acid sequence, 353 residues long: Dihydroorotate dehydrogenase (quinone) (353 aa).

FMN-binding positions include 67-71 and Thr91; that span reads AGFDK. Position 71 (Lys71) interacts with substrate. 116 to 120 contacts substrate; it reads NRMGF. 2 residues coordinate FMN: Asn144 and Asn177. Substrate is bound at residue Asn177. The active-site Nucleophile is the Ser180. Asn182 contributes to the substrate binding site. Positions 213 and 241 each coordinate FMN. 242–243 contributes to the substrate binding site; sequence NT. FMN is bound by residues Gly265, Gly294, and 315–316; that span reads YT.

The protein belongs to the dihydroorotate dehydrogenase family. Type 2 subfamily. In terms of assembly, monomer. The cofactor is FMN.

The protein resides in the cell membrane. The enzyme catalyses (S)-dihydroorotate + a quinone = orotate + a quinol. It participates in pyrimidine metabolism; UMP biosynthesis via de novo pathway; orotate from (S)-dihydroorotate (quinone route): step 1/1. Catalyzes the conversion of dihydroorotate to orotate with quinone as electron acceptor. The sequence is that of Dihydroorotate dehydrogenase (quinone) from Mycobacteroides abscessus (strain ATCC 19977 / DSM 44196 / CCUG 20993 / CIP 104536 / JCM 13569 / NCTC 13031 / TMC 1543 / L948) (Mycobacterium abscessus).